A 380-amino-acid chain; its full sequence is Erythronate-4-phosphate dehydrogenase (380 aa).

Residues S45 and T66 each coordinate substrate. NAD(+) contacts are provided by residues 126-127 (QV), D146, T174, 205-207 (ASR), and D231. The active site involves R207. E236 is an active-site residue. The active-site Proton donor is the H253. G256 is an NAD(+) binding site. Substrate is bound at residue Y257.

It belongs to the D-isomer specific 2-hydroxyacid dehydrogenase family. PdxB subfamily. As to quaternary structure, homodimer.

Its subcellular location is the cytoplasm. It catalyses the reaction 4-phospho-D-erythronate + NAD(+) = (R)-3-hydroxy-2-oxo-4-phosphooxybutanoate + NADH + H(+). Its pathway is cofactor biosynthesis; pyridoxine 5'-phosphate biosynthesis; pyridoxine 5'-phosphate from D-erythrose 4-phosphate: step 2/5. Its function is as follows. Catalyzes the oxidation of erythronate-4-phosphate to 3-hydroxy-2-oxo-4-phosphonooxybutanoate. The polypeptide is Erythronate-4-phosphate dehydrogenase (Pseudomonas syringae pv. syringae (strain B728a)).